Reading from the N-terminus, the 252-residue chain is Protein BTG3 (252 aa).

The tract at residues 138-163 is disordered; sequence VTSDYHSGSSSSDEDTSKEVDVKPSS.

It belongs to the BTG family. Ubiquitous.

In terms of biological role, overexpression impairs serum-induced cell cycle progression from the G0/G1 to S phase. The polypeptide is Protein BTG3 (Btg3) (Mus musculus (Mouse)).